The chain runs to 125 residues: Small ribosomal subunit protein uS11 (125 aa).

This sequence belongs to the universal ribosomal protein uS11 family. Part of the 30S ribosomal subunit. Interacts with proteins S7 and S18. Binds to IF-3.

Functionally, located on the platform of the 30S subunit, it bridges several disparate RNA helices of the 16S rRNA. Forms part of the Shine-Dalgarno cleft in the 70S ribosome. The polypeptide is Small ribosomal subunit protein uS11 (Aquifex aeolicus (strain VF5)).